Reading from the N-terminus, the 214-residue chain is Pyridoxine/pyridoxamine 5'-phosphate oxidase (214 aa).

Residues 8-11 (RKSY) and K67 each bind substrate. FMN contacts are provided by residues 62 to 67 (RVVLLK), 77 to 78 (YT), K84, and Q106. The substrate site is built by Y124, R128, and S132. Residues 141–142 (QS) and W186 contribute to the FMN site. 192–194 (RLH) serves as a coordination point for substrate. An FMN-binding site is contributed by R196.

The protein belongs to the pyridoxamine 5'-phosphate oxidase family. Homodimer. It depends on FMN as a cofactor.

It catalyses the reaction pyridoxamine 5'-phosphate + O2 + H2O = pyridoxal 5'-phosphate + H2O2 + NH4(+). The catalysed reaction is pyridoxine 5'-phosphate + O2 = pyridoxal 5'-phosphate + H2O2. It functions in the pathway cofactor metabolism; pyridoxal 5'-phosphate salvage; pyridoxal 5'-phosphate from pyridoxamine 5'-phosphate: step 1/1. Its pathway is cofactor metabolism; pyridoxal 5'-phosphate salvage; pyridoxal 5'-phosphate from pyridoxine 5'-phosphate: step 1/1. Functionally, catalyzes the oxidation of either pyridoxine 5'-phosphate (PNP) or pyridoxamine 5'-phosphate (PMP) into pyridoxal 5'-phosphate (PLP). The protein is Pyridoxine/pyridoxamine 5'-phosphate oxidase of Flavobacterium johnsoniae (strain ATCC 17061 / DSM 2064 / JCM 8514 / BCRC 14874 / CCUG 350202 / NBRC 14942 / NCIMB 11054 / UW101) (Cytophaga johnsonae).